Consider the following 494-residue polypeptide: Aspartyl/glutamyl-tRNA(Asn/Gln) amidotransferase subunit B (494 aa).

Belongs to the GatB/GatE family. GatB subfamily. As to quaternary structure, heterotrimer of A, B and C subunits.

The catalysed reaction is L-glutamyl-tRNA(Gln) + L-glutamine + ATP + H2O = L-glutaminyl-tRNA(Gln) + L-glutamate + ADP + phosphate + H(+). It catalyses the reaction L-aspartyl-tRNA(Asn) + L-glutamine + ATP + H2O = L-asparaginyl-tRNA(Asn) + L-glutamate + ADP + phosphate + 2 H(+). Its function is as follows. Allows the formation of correctly charged Asn-tRNA(Asn) or Gln-tRNA(Gln) through the transamidation of misacylated Asp-tRNA(Asn) or Glu-tRNA(Gln) in organisms which lack either or both of asparaginyl-tRNA or glutaminyl-tRNA synthetases. The reaction takes place in the presence of glutamine and ATP through an activated phospho-Asp-tRNA(Asn) or phospho-Glu-tRNA(Gln). In Synechococcus sp. (strain ATCC 27144 / PCC 6301 / SAUG 1402/1) (Anacystis nidulans), this protein is Aspartyl/glutamyl-tRNA(Asn/Gln) amidotransferase subunit B.